Here is a 427-residue protein sequence, read N- to C-terminus: Glucose-1-phosphate adenylyltransferase (427 aa).

Alpha-D-glucose 1-phosphate-binding positions include Y112, G177, 192 to 193, and S210; that span reads EK.

The protein belongs to the bacterial/plant glucose-1-phosphate adenylyltransferase family. As to quaternary structure, homotetramer.

It catalyses the reaction alpha-D-glucose 1-phosphate + ATP + H(+) = ADP-alpha-D-glucose + diphosphate. It functions in the pathway glycan biosynthesis; glycogen biosynthesis. Involved in the biosynthesis of ADP-glucose, a building block required for the elongation reactions to produce glycogen. Catalyzes the reaction between ATP and alpha-D-glucose 1-phosphate (G1P) to produce pyrophosphate and ADP-Glc. The sequence is that of Glucose-1-phosphate adenylyltransferase from Methylobacillus flagellatus (strain ATCC 51484 / DSM 6875 / VKM B-1610 / KT).